The following is a 531-amino-acid chain: Doublesex- and mab-3-related transcription factor A2 (531 aa).

Residues 69–116 (CARCRNHGVVSALKGHKRYCRWKDCLCAKCTLIAERQRVMAAQVALRR) constitute a DNA-binding region (DM). Residues 197-312 (LQAGRPDSPQ…GGPGPRQRTP (116 aa)) form a disordered region. Residues 274–285 (PGSSSPLGSESG) are compositionally biased toward low complexity. The region spanning 310-345 (RTPLDILTRVFPGHRRGVLELVLQGCGGDVVQAIEQ) is the DMA domain.

Belongs to the DMRT family. In terms of tissue distribution, expressed in adult brain and testis, as well as in embryonic ovary, kidney, heart, lung, stomach and brain.

It localises to the nucleus. In terms of biological role, may be involved in sexual development. The protein is Doublesex- and mab-3-related transcription factor A2 (Dmrta2) of Mus musculus (Mouse).